The sequence spans 717 residues: Photosystem I P700 chlorophyll a apoprotein A1 (717 aa).

8 helical membrane-spanning segments follow: residues 58–81 (VFSA…FHGA), 144–167 (LYCT…FHYH), 183–207 (LNHH…HVSL), 279–297 (IAHH…GHMY), 334–357 (WHAQ…HHMY), 373–399 (LSLF…IFMV), 421–443 (AIIS…LYIH), and 519–537 (FLVH…LILL). [4Fe-4S] cluster contacts are provided by Cys-561 and Cys-570. A run of 2 helical transmembrane segments spans residues 577–598 (HVFL…HFSW) and 652–674 (LSAY…MFLF). Chlorophyll a' is bound at residue His-663. Met-671 and Tyr-679 together coordinate chlorophyll a. Residue Trp-680 participates in phylloquinone binding. A helical membrane pass occupies residues 712 to 717 (AVGVTH).

Belongs to the PsaA/PsaB family. In terms of assembly, the PsaA/B heterodimer binds the P700 chlorophyll special pair and subsequent electron acceptors. PSI consists of a core antenna complex that captures photons, and an electron transfer chain that converts photonic excitation into a charge separation. The eukaryotic PSI reaction center is composed of at least 11 subunits. Requires P700 is a chlorophyll a/chlorophyll a' dimer, A0 is one or more chlorophyll a, A1 is one or both phylloquinones and FX is a shared 4Fe-4S iron-sulfur center. as cofactor.

The protein resides in the plastid. It is found in the chloroplast thylakoid membrane. The catalysed reaction is reduced [plastocyanin] + hnu + oxidized [2Fe-2S]-[ferredoxin] = oxidized [plastocyanin] + reduced [2Fe-2S]-[ferredoxin]. Its function is as follows. PsaA and PsaB bind P700, the primary electron donor of photosystem I (PSI), as well as the electron acceptors A0, A1 and FX. PSI is a plastocyanin-ferredoxin oxidoreductase, converting photonic excitation into a charge separation, which transfers an electron from the donor P700 chlorophyll pair to the spectroscopically characterized acceptors A0, A1, FX, FA and FB in turn. Oxidized P700 is reduced on the lumenal side of the thylakoid membrane by plastocyanin. The protein is Photosystem I P700 chlorophyll a apoprotein A1 of Drimys winteri (Winter's bark).